The following is an 82-amino-acid chain: Small ribosomal subunit protein bS16 (82 aa).

The protein belongs to the bacterial ribosomal protein bS16 family.

This is Small ribosomal subunit protein bS16 from Psychromonas ingrahamii (strain DSM 17664 / CCUG 51855 / 37).